A 741-amino-acid polypeptide reads, in one-letter code: Zinc metalloproteinase nas-30 (741 aa).

Low complexity-rich tracts occupy residues 71–85 (KPAP…APAP) and 97–118 (PAPK…DAPP). Residues 71 to 122 (KPAPAAAGPRSAPAPTNEDYNTDIDVPAPKAKARAAPTPRRAQADAPPVYRQ) form a disordered region. The region spanning 324-516 (KVITGSVYRW…VKQVNRLYCN (193 aa)) is the Peptidase M12A domain. 6 cysteine pairs are disulfide-bonded: Cys-364–Cys-515, Cys-385–Cys-404, Cys-519–Cys-539, Cys-541–Cys-550, Cys-562–Cys-583, and Cys-610–Cys-630. His-412 contacts Zn(2+). The active site involves Glu-413. His-416 and His-422 together coordinate Zn(2+). In terms of domain architecture, EGF-like spans 539-550 (CKCPDGLGGKLC). Positions 550–648 (CGRAAKGTDH…ISDQSEALIL (99 aa)) constitute a CUB domain. An N-linked (GlcNAc...) asparagine glycan is attached at Asn-633.

Requires Zn(2+) as cofactor.

Its function is as follows. Metalloprotease. This chain is Zinc metalloproteinase nas-30, found in Caenorhabditis elegans.